The following is a 312-amino-acid chain: Olfactory receptor 6C70 (312 aa).

Residues 1-22 (MKNHTRQIEFILLGLTDNSQLQ) lie on the Extracellular side of the membrane. N3 is a glycosylation site (N-linked (GlcNAc...) asparagine). Residues 23 to 43 (IVIFLFLLLNCVLSMIGNFTI) traverse the membrane as a helical segment. The Cytoplasmic segment spans residues 44–63 (IALILLDSQLKTPMYFFLRN). A helical membrane pass occupies residues 64–84 (FSFLEISFTTACIPRFLITIV). At 85 to 95 (TREKTISCNGC) the chain is on the extracellular side. An intrachain disulfide couples C95 to C177. Residues 96–116 (ISQLFFYIFLGVTEFFLLAAL) traverse the membrane as a helical segment. Residues 117–141 (SYDRYVAICKPLRYMSIMSNKVCYQ) lie on the Cytoplasmic side of the membrane. Residues 142–162 (LVFSSWVTGFLIIFTPLILGL) form a helical membrane-spanning segment. The Extracellular segment spans residues 163–194 (NLDFCASNIIDHFICDISLILQLSCSDTHLLE). The chain crosses the membrane as a helical span at residues 195 to 215 (LIAFLLAVMTLIVTLFLVILS). At 216-237 (YSYIIKTILKFPSAQQKKKAFS) the chain is on the cytoplasmic side. A helical transmembrane segment spans residues 238-258 (TCSSHMIVVSITYGSCMFIYI). At 259–272 (KPSANERVALSKGV) the chain is on the extracellular side. Residues 273 to 290 (TVLNTSVAPLLNPFIYTL) traverse the membrane as a helical segment. Topologically, residues 291-312 (RNQQVKQAFKAVFRKIFSASDK) are cytoplasmic.

Belongs to the G-protein coupled receptor 1 family.

It localises to the cell membrane. In terms of biological role, odorant receptor. In Homo sapiens (Human), this protein is Olfactory receptor 6C70 (OR6C70).